Here is a 344-residue protein sequence, read N- to C-terminus: MVKVGIVGGTGYTGVELLRLLAQHPQAEVVVITSRSEAGMPVAEMYPNLRGHYDGLAFSVPDVKTLGACDVVFFATPHGVAHALAGELLAAGTKVIDLSADFRLQDPVEWAKWYGQPHGAPQLLQDAVYGLPEVNREQIKNARLIAVPGCYPTATQLGFLPLLEAGIADNTRLIADCKSGVSGAGRGLSIGSLYSEANESFKAYAVKGHRHLPEITQGLRRAAGGDIGLTFVPHLVPMIRGIHSTLYATVADRSVDLQALFEKRYADEPFVDVMPAGSHPETRSVRGANVCRIAVHRPQGGDLVVVLSVIDNLVKGASGQAVQNMNILFGLDERAGLSHAGMMP.

Cysteine 150 is a catalytic residue.

The protein belongs to the NAGSA dehydrogenase family. Type 1 subfamily.

It is found in the cytoplasm. The catalysed reaction is N-acetyl-L-glutamate 5-semialdehyde + phosphate + NADP(+) = N-acetyl-L-glutamyl 5-phosphate + NADPH + H(+). Its pathway is amino-acid biosynthesis; L-arginine biosynthesis; N(2)-acetyl-L-ornithine from L-glutamate: step 3/4. Catalyzes the NADPH-dependent reduction of N-acetyl-5-glutamyl phosphate to yield N-acetyl-L-glutamate 5-semialdehyde. The protein is N-acetyl-gamma-glutamyl-phosphate reductase of Pseudomonas savastanoi pv. phaseolicola (strain 1448A / Race 6) (Pseudomonas syringae pv. phaseolicola (strain 1448A / Race 6)).